The primary structure comprises 103 residues: O2 contryphan Vc1 (103 aa).

Positions M1–G23 are cleaved as a signal peptide. The propeptide occupies D24–R67. Basic and acidic residues predominate over residues G25–D44. A disordered region spans residues G25–P50. Q68 is modified (pyrrolidone carboxylic acid). A disulfide bridge links C70 with C83. Positions R99 to Q103 are excised as a propeptide.

The protein belongs to the O2 superfamily. Post-translationally, pyrrolidone carboxylic acid at position 1 has no significant effect on the structure of contryphan-Vc1. Expressed by the venom gland.

Its subcellular location is the secreted. In terms of biological role, unknown. Intracranial injection of the peptide into mice does not produce toxic effects. In addition, the peptide does not produce any observable changes to normal or depolarization-induced intracellular calcium levels in mouse dorsal root ganglion cells. This is O2 contryphan Vc1 from Conus victoriae (Queen Victoria cone).